Here is an 818-residue protein sequence, read N- to C-terminus: MSVSRVTMMRKGHSGEVARKPNTVVVSVPPLVKKSSKSRSFHFRYLELCRAKNLTPVPEIRSKSNATTTFLELCGDKLAVSDWQLLTEALHYDLVLQQLVVRLRRTYPQTNIDPIDTEKRARLFRQRPVIYTRFIFNSLVQAIANCVSSNKNLSVLKLEGLPLQDGYIETIAKALADNECLESVSFRKSNIGDKGCEVVCNTAKYLNRIEVFDLSECGLTSKGAEHVADMLKMQKITRFTEGWEKSLRYRSVDVNTIGGLRTVLLADNPEIGDVGIRWITEVLKEDAWIKKIDMEGCGLTDIGANLILDCLELNTAITEFNVRNNEGISKFLQRSIHDRLGCLPEEKQEPEYDLSCVNGLQSLPKNKKVTVSQLLSHTKALEEQLSFERTLRKKAEKLNEKLSHQLMRPDSNHMVQEKAMEGGSQTNISREYVARNDVMPEVIKNSQSYRQSHFNRLVNSAATSPEVTPRSEIVTLRKEQQLQRQQPPPMEVKHLSLEQQIRNLRDVQKKVDLDVEEEEEEEEEEQQAEESQSESEPQNEEQQHYEQQMQVQRKHLQVRKVRSEIKYVENNPKEAAKKNRESKSDHEFANERDFKLNPSVQFETDIGDNVMVNPGHRYEGGGGDTAYVYNYEHEQQQQPVKRGYEHGYVVGVGDGSHRRQRQSQLVEALVQKRVPGASDGHVAQFVSNLERQANAGKTGKKRLKPRPEDDLQVPVGDMHMESSYMSRSEELSSTDVTLENSDYETEATDSTLLSSSKYSSMHVFVRRKQSESMSLTEEAGDGDAGGGGGSGDFGDQNVISPANVYMSLQLQKQREQSA.

Disordered stretches follow at residues 513 to 589, 691 to 748, and 768 to 798; these read LDVE…HEFA, RQAN…TEAT, and KQSE…DQNV. Over residues 514–539 the composition is skewed to acidic residues; sequence DVEEEEEEEEEEQQAEESQSESEPQN. The span at 561-589 shows a compositional bias: basic and acidic residues; it reads VRSEIKYVENNPKEAAKKNRESKSDHEFA. Over residues 782-792 the composition is skewed to gly residues; sequence GDAGGGGGSGD.

This sequence belongs to the CEP78 family.

The protein resides in the cytoplasm. Its subcellular location is the cytoskeleton. It is found in the microtubule organizing center. It localises to the centrosome. The protein localises to the centriole. The protein resides in the cilium basal body. May play a role in cilium biogenesis. This is Protein Cep78 homolog from Drosophila melanogaster (Fruit fly).